The sequence spans 279 residues: DNA repair protein RecO (279 aa).

Belongs to the RecO family.

In terms of biological role, involved in DNA repair and RecF pathway recombination. In Thermosynechococcus vestitus (strain NIES-2133 / IAM M-273 / BP-1), this protein is DNA repair protein RecO.